The chain runs to 70 residues: U2-agatoxin-Ao1a (70 aa).

Residues 1–20 (MRAIISLFLISAMVFSMIQA) form the signal peptide. The propeptide occupies 21-34 (VPEEEGLQLSEDER). Cystine bridges form between Cys-37–Cys-53, Cys-44–Cys-58, and Cys-52–Cys-68. Position 69 is a leucine amide (Leu-69).

This sequence belongs to the neurotoxin 01 (U2-agtx) family. As to expression, expressed by the venom gland.

The protein resides in the secreted. Insect active toxin causing rapid but reversible paralysis in crickets. No activity shown in mammals. Suppresses the excitatory postsynaptic potentials evoked in lobster neuromuscular synaptic preparations, possibly by blocking the presynaptic calcium channel. Induces instantaneous reversible paralysis when injected into crickets. Does not show effect on mammalian Cav2.1/CACNA1A, Cav2.2/CACNA1B and Cav2.3/CACNA1E. The sequence is that of U2-agatoxin-Ao1a from Agelena orientalis (Funnel-web spider).